We begin with the raw amino-acid sequence, 457 residues long: UDP-N-acetylmuramoylalanine--D-glutamate ligase (457 aa).

117 to 123 (GTNGKST) contacts ATP.

The protein belongs to the MurCDEF family.

The protein localises to the cytoplasm. The catalysed reaction is UDP-N-acetyl-alpha-D-muramoyl-L-alanine + D-glutamate + ATP = UDP-N-acetyl-alpha-D-muramoyl-L-alanyl-D-glutamate + ADP + phosphate + H(+). Its pathway is cell wall biogenesis; peptidoglycan biosynthesis. Functionally, cell wall formation. Catalyzes the addition of glutamate to the nucleotide precursor UDP-N-acetylmuramoyl-L-alanine (UMA). The sequence is that of UDP-N-acetylmuramoylalanine--D-glutamate ligase from Paramagnetospirillum magneticum (strain ATCC 700264 / AMB-1) (Magnetospirillum magneticum).